The chain runs to 198 residues: Ribonuclease HII (198 aa).

The 189-residue stretch at 10–198 folds into the RNase H type-2 domain; that stretch reads QLVAGVDEVG…PVKRALGLAS (189 aa). A divalent metal cation contacts are provided by D16, E17, and D108.

This sequence belongs to the RNase HII family. The cofactor is Mn(2+). Mg(2+) is required as a cofactor.

It localises to the cytoplasm. It catalyses the reaction Endonucleolytic cleavage to 5'-phosphomonoester.. In terms of biological role, endonuclease that specifically degrades the RNA of RNA-DNA hybrids. This chain is Ribonuclease HII, found in Citrobacter koseri (strain ATCC BAA-895 / CDC 4225-83 / SGSC4696).